The chain runs to 254 residues: Pyridoxine 5'-phosphate synthase (254 aa).

Asn-12 contributes to the 3-amino-2-oxopropyl phosphate binding site. Residue 14–15 (DH) coordinates 1-deoxy-D-xylulose 5-phosphate. Residue Arg-23 participates in 3-amino-2-oxopropyl phosphate binding. Catalysis depends on His-48, which acts as the Proton acceptor. The 1-deoxy-D-xylulose 5-phosphate site is built by Arg-50 and His-55. Residue Glu-75 is the Proton acceptor of the active site. Residue Thr-105 participates in 1-deoxy-D-xylulose 5-phosphate binding. Catalysis depends on His-199, which acts as the Proton donor. 3-amino-2-oxopropyl phosphate-binding positions include Gly-200 and 221–222 (GF).

This sequence belongs to the PNP synthase family. In terms of assembly, homooctamer; tetramer of dimers.

The protein resides in the cytoplasm. It carries out the reaction 3-amino-2-oxopropyl phosphate + 1-deoxy-D-xylulose 5-phosphate = pyridoxine 5'-phosphate + phosphate + 2 H2O + H(+). It functions in the pathway cofactor biosynthesis; pyridoxine 5'-phosphate biosynthesis; pyridoxine 5'-phosphate from D-erythrose 4-phosphate: step 5/5. Catalyzes the complicated ring closure reaction between the two acyclic compounds 1-deoxy-D-xylulose-5-phosphate (DXP) and 3-amino-2-oxopropyl phosphate (1-amino-acetone-3-phosphate or AAP) to form pyridoxine 5'-phosphate (PNP) and inorganic phosphate. The chain is Pyridoxine 5'-phosphate synthase from Rhodopseudomonas palustris (strain TIE-1).